A 1082-amino-acid polypeptide reads, in one-letter code: Error-prone DNA polymerase (1082 aa).

The protein belongs to the DNA polymerase type-C family. DnaE2 subfamily.

The protein localises to the cytoplasm. The catalysed reaction is DNA(n) + a 2'-deoxyribonucleoside 5'-triphosphate = DNA(n+1) + diphosphate. Its function is as follows. DNA polymerase involved in damage-induced mutagenesis and translesion synthesis (TLS). It is not the major replicative DNA polymerase. This chain is Error-prone DNA polymerase, found in Xanthomonas campestris pv. campestris (strain B100).